The primary structure comprises 82 residues: MSKGQNLQDPFLNTLRKEHVPVSIYLVNGIKLQGKVDSFDQYVIMLKNTVSQMVYKHAISTIVPGRPVRVPHAGESGDEEAE.

The Sm domain occupies Asp9–Val68.

Belongs to the Hfq family. Homohexamer.

Its function is as follows. RNA chaperone that binds small regulatory RNA (sRNAs) and mRNAs to facilitate mRNA translational regulation in response to envelope stress, environmental stress and changes in metabolite concentrations. Also binds with high specificity to tRNAs. This is RNA-binding protein Hfq from Methylococcus capsulatus (strain ATCC 33009 / NCIMB 11132 / Bath).